A 374-amino-acid chain; its full sequence is MADGIDRNADEKMEFSTSKEVTVAPTFEAMHLKENLLRGIYAYGYESPSAVQSRAIVQVCKGRDTIAQAQSGTGKTATFSISILQSVIMGLGDYMNVQCHACIGGTNVGEDIRKLDYGQHVVSGTPGRVADMIRRRNLRTRNIKMLVLDEADELLNRGFREQIYDVYRYLPPATQVVVVSATLPYDVLEMTTKFMTDPVRILVKRDELTLEGLKQYFIAIEKEEWKFDTLCDLYDTLTITQAVIFCNTRRKVDWLTDKMREANFTVSSMHGDMPQRERDSIMQDFRQANSRVLISTDVWARGIDVQQVSLVINYDLPSNRENYIHRIGRSGRFGRKGVAINFVTQEDVRILRDIELYYSTQIDEMPMNVADLLA.

Residues 25–53 carry the Q motif motif; sequence PTFEAMHLKENLLRGIYAYGYESPSAVQS. The Helicase ATP-binding domain maps to 56-201; that stretch reads IVQVCKGRDT…TKFMTDPVRI (146 aa). 69–76 is a binding site for ATP; sequence AQSGTGKT. The short motif at 149–152 is the DEAD box element; the sequence is DEAD. The region spanning 212–373 is the Helicase C-terminal domain; sequence GLKQYFIAIE…EMPMNVADLL (162 aa).

Belongs to the DEAD box helicase family. DDX48/FAL1 subfamily.

The protein resides in the nucleus. The protein localises to the nucleolus. It carries out the reaction ATP + H2O = ADP + phosphate + H(+). Its function is as follows. ATP-dependent RNA helicase involved in 40S ribosomal subunit biogenesis. Required for the processing and cleavage of 35S pre-rRNA at sites A0, A1, and A2, leading to mature 18S rRNA. In Phaeosphaeria nodorum (strain SN15 / ATCC MYA-4574 / FGSC 10173) (Glume blotch fungus), this protein is ATP-dependent RNA helicase FAL1 (FAL1).